A 625-amino-acid polypeptide reads, in one-letter code: Mesothelin (625 aa).

The signal sequence occupies residues 1-35 (MALPTARPLLGSCGSPICSRSFLLLLLSLGWIPRL). N-linked (GlcNAc...) asparagine glycosylation is present at asparagine 93. Serine 202 carries the phosphoserine modification. The cysteines at positions 304 and 328 are disulfide-linked. 3 N-linked (GlcNAc...) asparagine glycosylation sites follow: asparagine 390, asparagine 488, and asparagine 517. Serine 600 carries the GPI-anchor amidated serine lipid modification. Residues 601 to 625 (SRASLLGPGFVLIWIPALLPALRLS) constitute a propeptide, removed in mature form.

It belongs to the mesothelin family. In terms of assembly, interacts with MUC16. Post-translationally, proteolytically cleaved by a furin-like convertase to generate megakaryocyte-potentiating factor (MPF), and the cleaved form of mesothelin. Highly expressed in lung and heart. Expressed at low levels in spleen, liver, kidney and testis. Present in lung (at protein level).

Its subcellular location is the cell membrane. The protein resides in the golgi apparatus. It is found in the secreted. Membrane-anchored forms may play a role in cellular adhesion. Its function is as follows. Megakaryocyte-potentiating factor (MPF) may potentiate megakaryocyte colony formation. The chain is Mesothelin (Msln) from Mus musculus (Mouse).